Consider the following 320-residue polypeptide: Small ribosomal subunit protein uS2 (320 aa).

A compositionally biased stretch (acidic residues) spans 1 to 22 (MADETTTDTPDVQDEDAPDEDA). Residues 1 to 83 (MADETTTDTP…SSSEEETSHR (83 aa)) are disordered. The span at 27–41 (DDTASDSTGEAAAAD) shows a compositional bias: low complexity. 2 stretches are compositionally biased toward acidic residues: residues 42–57 (TDAD…EDAP) and 65–78 (DDGD…SSEE).

Belongs to the universal ribosomal protein uS2 family.

The sequence is that of Small ribosomal subunit protein uS2 from Salinibacter ruber (strain DSM 13855 / M31).